A 155-amino-acid chain; its full sequence is Pathogenesis-related protein A (155 aa).

Belongs to the BetVI family.

The chain is Pathogenesis-related protein A (PCPR1-1) from Petroselinum crispum (Parsley).